A 317-amino-acid chain; its full sequence is tRNA dimethylallyltransferase (317 aa).

14–21 (GPTAVGKT) contributes to the ATP binding site. Residue 16-21 (TAVGKT) participates in substrate binding. Positions 39–42 (DSMQ) are interaction with substrate tRNA.

The protein belongs to the IPP transferase family. Monomer. Mg(2+) serves as cofactor.

It catalyses the reaction adenosine(37) in tRNA + dimethylallyl diphosphate = N(6)-dimethylallyladenosine(37) in tRNA + diphosphate. Functionally, catalyzes the transfer of a dimethylallyl group onto the adenine at position 37 in tRNAs that read codons beginning with uridine, leading to the formation of N6-(dimethylallyl)adenosine (i(6)A). This chain is tRNA dimethylallyltransferase, found in Bacillus mycoides (strain KBAB4) (Bacillus weihenstephanensis).